The chain runs to 268 residues: Oxygen-evolving enhancer protein 2-1, chloroplastic (268 aa).

The transit peptide at 1-82 (MASTQCFLHQ…IGSKVSPADA (82 aa)) directs the protein to the chloroplast.

This sequence belongs to the PsbP family.

The protein resides in the plastid. It localises to the chloroplast thylakoid membrane. May be involved in the regulation of photosystem II. This chain is Oxygen-evolving enhancer protein 2-1, chloroplastic (PSBP1), found in Nicotiana tabacum (Common tobacco).